Consider the following 188-residue polypeptide: dCTP deaminase (188 aa).

Residues 111 to 116 (KSTYAR), 135 to 137 (TLE), Gln156, Tyr170, and Gln180 contribute to the dCTP site. Glu137 (proton donor/acceptor) is an active-site residue.

It belongs to the dCTP deaminase family. Homotrimer.

The enzyme catalyses dCTP + H2O + H(+) = dUTP + NH4(+). It functions in the pathway pyrimidine metabolism; dUMP biosynthesis; dUMP from dCTP (dUTP route): step 1/2. Catalyzes the deamination of dCTP to dUTP. This is dCTP deaminase from Francisella tularensis subsp. tularensis (strain FSC 198).